The chain runs to 262 residues: 3-methyl-2-oxobutanoate hydroxymethyltransferase (262 aa).

Mg(2+)-binding residues include aspartate 44 and aspartate 83. 3-methyl-2-oxobutanoate contacts are provided by residues 44 to 45, aspartate 83, and lysine 112; that span reads DS. Glutamate 114 serves as a coordination point for Mg(2+). Glutamate 180 (proton acceptor) is an active-site residue.

The protein belongs to the PanB family. Homodecamer; pentamer of dimers. Mg(2+) serves as cofactor.

Its subcellular location is the cytoplasm. It catalyses the reaction 3-methyl-2-oxobutanoate + (6R)-5,10-methylene-5,6,7,8-tetrahydrofolate + H2O = 2-dehydropantoate + (6S)-5,6,7,8-tetrahydrofolate. The protein operates within cofactor biosynthesis; (R)-pantothenate biosynthesis; (R)-pantoate from 3-methyl-2-oxobutanoate: step 1/2. Functionally, catalyzes the reversible reaction in which hydroxymethyl group from 5,10-methylenetetrahydrofolate is transferred onto alpha-ketoisovalerate to form ketopantoate. In Chromobacterium violaceum (strain ATCC 12472 / DSM 30191 / JCM 1249 / CCUG 213 / NBRC 12614 / NCIMB 9131 / NCTC 9757 / MK), this protein is 3-methyl-2-oxobutanoate hydroxymethyltransferase.